The following is a 467-amino-acid chain: UPF0236 protein TTE0033/TTE0744/TTE0838/TTE0852/TTE1082/TTE1247/TTE1519/TTE1678/TTE1739/TTE1823/TTE2212 (467 aa).

The protein belongs to the UPF0236 family.

This chain is UPF0236 protein TTE0033/TTE0744/TTE0838/TTE0852/TTE1082/TTE1247/TTE1519/TTE1678/TTE1739/TTE1823/TTE2212, found in Caldanaerobacter subterraneus subsp. tengcongensis (strain DSM 15242 / JCM 11007 / NBRC 100824 / MB4) (Thermoanaerobacter tengcongensis).